Here is a 468-residue protein sequence, read N- to C-terminus: Replication factor C large subunit (468 aa).

Position 50–57 (50–57 (GPPGSGKT)) interacts with ATP. The tract at residues 422–456 (EEKAVEEKVEEEEAEEEEEEERKEEEKPKAEKKKG) is disordered. The span at 429-444 (KVEEEEAEEEEEEERK) shows a compositional bias: acidic residues.

This sequence belongs to the activator 1 small subunits family. RfcL subfamily. As to quaternary structure, heteromultimer composed of small subunits (RfcS) and large subunits (RfcL).

Its function is as follows. Part of the RFC clamp loader complex which loads the PCNA sliding clamp onto DNA. This chain is Replication factor C large subunit, found in Pyrococcus horikoshii (strain ATCC 700860 / DSM 12428 / JCM 9974 / NBRC 100139 / OT-3).